The sequence spans 657 residues: Pentatricopeptide repeat-containing protein At2g37310 (657 aa).

PPR repeat units lie at residues Asp21–Pro55, Asp56–Arg86, Asn87–Ser121, Asp128–Ser165, Asp166–Arg196, Asp197–Pro232, Asn233–Met267, Asp268–Lys298, Asp299–Thr333, Trp334–Pro364, Asn365–Asn399, Asn400–Arg430, Ser431–Pro465, Asp466–Pro501, and Gly502–Lys536. The type E motif stretch occupies residues Val537 to Glu612. Residues Lys613–Ser643 are type E(+) motif.

It belongs to the PPR family. PCMP-E subfamily.

The protein is Pentatricopeptide repeat-containing protein At2g37310 (PCMP-E49) of Arabidopsis thaliana (Mouse-ear cress).